The sequence spans 141 residues: Hemoglobin subunit alpha (141 aa).

Residues 1–141 (VLSPADKTNV…VSTVLTSKYR (141 aa)) enclose the Globin domain. The residue at position 3 (S3) is a Phosphoserine. N6-succinyllysine is present on K7. T8 is modified (phosphothreonine). K11 carries the N6-succinyllysine modification. At K16 the chain carries N6-acetyllysine; alternate. The residue at position 16 (K16) is an N6-succinyllysine; alternate. Position 24 is a phosphotyrosine (Y24). S35 bears the Phosphoserine mark. Residue K40 is modified to N6-succinyllysine. Position 49 is a phosphoserine (S49). An O2-binding site is contributed by H58. Heme b is bound at residue H87. Residue S102 is modified to Phosphoserine. T108 is subject to Phosphothreonine. S124 and S131 each carry phosphoserine. Phosphothreonine occurs at positions 134 and 137. Position 138 is a phosphoserine (S138).

The protein belongs to the globin family. Heterotetramer of two alpha chains and two beta chains. As to expression, red blood cells.

Functionally, involved in oxygen transport from the lung to the various peripheral tissues. Hemopressin acts as an antagonist peptide of the cannabinoid receptor CNR1. Hemopressin-binding efficiently blocks cannabinoid receptor CNR1 and subsequent signaling. This is Hemoglobin subunit alpha (HBA) from Taphozous georgianus (Sharp-nosed tomb bat).